The sequence spans 955 residues: Calsyntenin-2 (955 aa).

Positions 1-20 are cleaved as a signal peptide; sequence MLPGRLCWVPLLLALGVGSG. Topologically, residues 21–831 are extracellular; sequence SGGGGDSRQR…SIQHSSVVPS (811 aa). 2 consecutive Cadherin domains span residues 44–160 and 161–280; these read IETS…APTF and KEPA…MPLF. Residues asparagine 56 and asparagine 98 are each glycosylated (N-linked (GlcNAc...) asparagine). N-linked (GlcNAc...) asparagine glycosylation is found at asparagine 342, asparagine 374, asparagine 716, and asparagine 729. The helical transmembrane segment at 832 to 852 threads the bilayer; the sequence is IATVVIIISVCMLVFVVAMGV. The Cytoplasmic segment spans residues 853 to 955; sequence YRVRIAHQHF…LEWDDSTLPY (103 aa). Residues 887 to 955 form a disordered region; the sequence is PMEKHEGPGH…LEWDDSTLPY (69 aa). A compositionally biased stretch (basic and acidic residues) spans 888 to 898; sequence MEKHEGPGHGE. 2 stretches are compositionally biased toward acidic residues: residues 899–913 and 920–929; these read DETE…EEEM and DDSEEEEEEE.

Belongs to the calsyntenin family. In terms of processing, proteolytically processed under normal cellular conditions. A primary zeta-cleavage generates a large extracellular (soluble) N-terminal domain (sAlc) and a short C-terminal transmembrane fragment (CTF1). A secondary cleavage catalyzed by gamma-secretase within the transmembrane domain releases the beta-Alc-gamma chain in the extracellular milieu and produces an intracellular fragment (AlcICD). This processing is strongly suppressed in the tripartite complex formed with APBA2 and APP, which seems to prevent the association with PSEN1. In terms of tissue distribution, restricted to the brain.

The protein resides in the postsynaptic cell membrane. It is found in the endoplasmic reticulum membrane. The protein localises to the golgi apparatus membrane. It localises to the cell projection. Its subcellular location is the dendrite. Postsynaptic adhesion molecule that binds to presynaptic neurexins to mediate synapse formation, and which is involved in learning and memory. Promotes synapse development by acting as a cell adhesion molecule at the postsynaptic membrane, which associates with neurexin-alpha at the presynaptic membrane. This Homo sapiens (Human) protein is Calsyntenin-2.